The chain runs to 691 residues: Dipeptidyl peptidase 3 (691 aa).

Residue histidine 431 coordinates Zn(2+). Residue glutamate 432 is part of the active site. Positions 436 and 492 each coordinate Zn(2+).

It belongs to the peptidase M49 family. Requires Zn(2+) as cofactor.

Its subcellular location is the cytoplasm. The enzyme catalyses Release of an N-terminal dipeptide from a peptide comprising four or more residues, with broad specificity. Also acts on dipeptidyl 2-naphthylamides.. The sequence is that of Dipeptidyl peptidase 3 (dpp3-1) from Dictyostelium discoideum (Social amoeba).